Consider the following 75-residue polypeptide: Putative defensin-like protein 55 (75 aa).

Positions 1 to 19 are cleaved as a signal peptide; sequence MNITKAYVIFFLVVILTNS. Disulfide bonds link C39/C73, C43/C66, C52/C71, and C56/C72.

It belongs to the DEFL family.

The protein resides in the secreted. This Arabidopsis thaliana (Mouse-ear cress) protein is Putative defensin-like protein 55.